Consider the following 245-residue polypeptide: 1-(5-phosphoribosyl)-5-[(5-phosphoribosylamino)methylideneamino] imidazole-4-carboxamide isomerase (245 aa).

The Proton acceptor role is filled by Asp8. The Proton donor role is filled by Asp130.

It belongs to the HisA/HisF family.

It is found in the cytoplasm. It catalyses the reaction 1-(5-phospho-beta-D-ribosyl)-5-[(5-phospho-beta-D-ribosylamino)methylideneamino]imidazole-4-carboxamide = 5-[(5-phospho-1-deoxy-D-ribulos-1-ylimino)methylamino]-1-(5-phospho-beta-D-ribosyl)imidazole-4-carboxamide. Its pathway is amino-acid biosynthesis; L-histidine biosynthesis; L-histidine from 5-phospho-alpha-D-ribose 1-diphosphate: step 4/9. The sequence is that of 1-(5-phosphoribosyl)-5-[(5-phosphoribosylamino)methylideneamino] imidazole-4-carboxamide isomerase from Pseudomonas aeruginosa (strain LESB58).